A 444-amino-acid polypeptide reads, in one-letter code: MKNIIYCILLLFSFNSYALETINIEHGKADPTPIAVNNFEADSASDNTVGHEIVKVISNDLKLCGLFHPISSASFIEEKTGIGYKPLFAAWRQINASLLVNGAVKKLENGKLKISFILWDTLLEKQLGGEVLELPENLWRRAAHKIADKIYEKITGDTGYFDSKIIYVAESGPDLKKVKRIALMDYDGANNRYITDGKSLVLTPRFSGSADKIFYVSYATKRRTLVYEKDLKTGKESIVGDFAGISFAPRFAPDGRKAVMSIAKNGSTHIYEIDLATKRLHKLTDGFGINTSPSYSPDGRRIVFNSDRNGVPQLYIMNSDGSNVQRISFGGGSYMAPSWSPRGDYIAFTKIIRGSEGKTFNIGVMKPYPQDDENSERVIASGYLVESPCWSPNGRVIMFAKGWPSNGKSSGKNRIYAIDLTGHNEREIKTPGDASDPEWSNLLN.

A signal peptide spans 1-18 (MKNIIYCILLLFSFNSYA).

This sequence belongs to the TolB family. As to quaternary structure, the Tol-Pal system is composed of five core proteins: the inner membrane proteins TolA, TolQ and TolR, the periplasmic protein TolB and the outer membrane protein Pal. They form a network linking the inner and outer membranes and the peptidoglycan layer.

Its subcellular location is the periplasm. Its function is as follows. Part of the Tol-Pal system, which plays a role in outer membrane invagination during cell division and is important for maintaining outer membrane integrity. The sequence is that of Tol-Pal system protein TolB from Rickettsia bellii (strain OSU 85-389).